An 846-amino-acid polypeptide reads, in one-letter code: MAEITVGQLAQQTNKEVDALLKQLKSFGIEKSSEKDTLTPTEMKTLLEKINSAKNTATRKKVTSVKLDGKHKINVSVKRKRRVAKKMEQQESTTLEQPQELETMVQEVSQQVDIVKEQDNIEQIVENKEAVKVQEQRQAEIAKPVIKDSGFKITAMPEIKIEEIVAEDDEGLAASDKQAKKKAAKKVFSEAVNTNTKYKREEEEKKSKAKKAGGKGFKKANPRQLSQLAGDLESFDEFGAKKGKLKAPKVKKQEFTKPVENTVRTVEIHEGITVSELAQKMAVKGAEIVKVLFNMGVMATINQSLDQDTAILIVEEMGHKYTLHNENALEEAVTIVDRSSYKKISRAPVVTIMGHVDHGKTSLLDYIRQTRVVAGEAGGITQHIGAYSVKTDKGSITFLDTPGHEAFTSMRARGAKSTDIVILVVAADDGVMPQTEEAIQHAKAARVPIVVAVNKIDKPEADSDKVISELAQRNVIPESWGGDVMFVNVSAKTGEGVADLLEAVLLQSEVLELEAFAEGLAEGVVIESRLEKGRGPVATVLVQNGNLKQGDNILCGTEYGRVRAMHNDLGKKIKAAGPATPVEILGLSGVPAAGDEMVVIENEKKAKELAAQRSQKQKEAKIAQEQSLKLSNMFNNMGKEGEQQVLKIILKGDVQGSVEAIRESLLKLSTDEVKVDIIASGIGAITSSDVTLAVASTAVVIGFNVRADSAAKKLAETDGVEFRYYNIIYDLIDDVKKAMSGLLSPEMKEQIIGIAEVREVYRSSKFGSIAGCMVIEGVVKRTNPIRVLRNNVVIYEGTLESLKRFKDDASEVKKGLECGIGVKNYNDVREGDQIEVFEVIEVAKEL.

The tract at residues 198–219 (YKREEEEKKSKAKKAGGKGFKK) is disordered. The segment covering 207–219 (SKAKKAGGKGFKK) has biased composition (basic residues). The region spanning 345-512 (SRAPVVTIMG…AVLLQSEVLE (168 aa)) is the tr-type G domain. The G1 stretch occupies residues 354–361 (GHVDHGKT). GTP is bound at residue 354–361 (GHVDHGKT). Positions 379 to 383 (GITQH) are G2. Residues 400–403 (DTPG) form a G3 region. Residues 400–404 (DTPGH) and 454–457 (NKID) each bind GTP. The tract at residues 454–457 (NKID) is G4. The segment at 490–492 (SAK) is G5.

It belongs to the TRAFAC class translation factor GTPase superfamily. Classic translation factor GTPase family. IF-2 subfamily.

The protein localises to the cytoplasm. Functionally, one of the essential components for the initiation of protein synthesis. Protects formylmethionyl-tRNA from spontaneous hydrolysis and promotes its binding to the 30S ribosomal subunits. Also involved in the hydrolysis of GTP during the formation of the 70S ribosomal complex. The chain is Translation initiation factor IF-2 from Francisella tularensis subsp. holarctica (strain OSU18).